The sequence spans 319 residues: Pantothenate kinase (319 aa).

96–103 contributes to the ATP binding site; it reads GSVAVGKS.

This sequence belongs to the prokaryotic pantothenate kinase family.

The protein resides in the cytoplasm. It carries out the reaction (R)-pantothenate + ATP = (R)-4'-phosphopantothenate + ADP + H(+). Its pathway is cofactor biosynthesis; coenzyme A biosynthesis; CoA from (R)-pantothenate: step 1/5. This chain is Pantothenate kinase, found in Bacillus velezensis (strain DSM 23117 / BGSC 10A6 / LMG 26770 / FZB42) (Bacillus amyloliquefaciens subsp. plantarum).